The sequence spans 59 residues: Large ribosomal subunit protein uL30 (59 aa).

This sequence belongs to the universal ribosomal protein uL30 family. As to quaternary structure, part of the 50S ribosomal subunit.

In Enterobacter sp. (strain 638), this protein is Large ribosomal subunit protein uL30.